We begin with the raw amino-acid sequence, 331 residues long: Protoheme IX farnesyltransferase (331 aa).

Helical transmembrane passes span L63 to L83, S109 to V129, L132 to L152, I160 to G180, W188 to L208, V215 to V235, V241 to L261, and I294 to V314.

The protein belongs to the UbiA prenyltransferase family. Protoheme IX farnesyltransferase subfamily.

Its subcellular location is the cell inner membrane. The catalysed reaction is heme b + (2E,6E)-farnesyl diphosphate + H2O = Fe(II)-heme o + diphosphate. The protein operates within porphyrin-containing compound metabolism; heme O biosynthesis; heme O from protoheme: step 1/1. Functionally, converts heme B (protoheme IX) to heme O by substitution of the vinyl group on carbon 2 of heme B porphyrin ring with a hydroxyethyl farnesyl side group. The chain is Protoheme IX farnesyltransferase from Prochlorococcus marinus (strain NATL1A).